Consider the following 357-residue polypeptide: Queuosine-tRNA galactosyltransferase (357 aa).

It belongs to the glycosyltransferase 2 family.

The protein localises to the cytoplasm. It carries out the reaction queuosine(34) in tRNA(Tyr) + UDP-alpha-D-galactose = O-5''-beta-D-galactosylqueuosine(34) in tRNA(Tyr) + UDP + H(+). Functionally, glycosyltransferase that specifically catalyzes galactosylation of cytoplasmic tRNA(Tyr) modified with queuosine at position 34 (queuosine(34)). Galactosylates the cyclopentene hydroxyl group of queuosine(34) in tRNA(Tyr) to form galactosyl-queuosine(34). Mannosylation of queuosine(34) in tRNA(Tyr) is required to slow-down elongation at cognate codons UAC and suppress stop codon readthrough, thereby regulating protein translation. The chain is Queuosine-tRNA galactosyltransferase from Mus musculus (Mouse).